The sequence spans 272 residues: Probable prolyl 4-hydroxylase 11 (272 aa).

The Cytoplasmic segment spans residues 1–55 (MSKSTSVSTILYLRQRLQGLKIYETSDLIQHINTFDELVGEQVSVDVKIEEKTKD). The helical; Signal-anchor for type II membrane protein transmembrane segment at 56 to 80 (MILLCSLSPLLTTLTCSMVKVAASL) threads the bilayer. Residues 81–272 (RFPNERWLEV…KRHCLSLNLF (192 aa)) are Lumenal-facing. In terms of domain architecture, Fe2OG dioxygenase spans 179-272 (NGETLQVINY…KRHCLSLNLF (94 aa)). His-197, Asp-199, and His-261 together coordinate Fe cation.

It belongs to the P4HA family. Requires Fe(2+) as cofactor. It depends on L-ascorbate as a cofactor.

The protein localises to the endoplasmic reticulum membrane. It catalyses the reaction L-prolyl-[collagen] + 2-oxoglutarate + O2 = trans-4-hydroxy-L-prolyl-[collagen] + succinate + CO2. Catalyzes the post-translational formation of 4-hydroxyproline in -Xaa-Pro-Gly- sequences in proline-rich peptide sequences of plant glycoproteins and other proteins. Hydroxyprolines are important constituent of many plant cell wall glycoproteins such as extensins, hydroxyproline-rich glycoproteins, lectins and arabinogalactan proteins. This is Probable prolyl 4-hydroxylase 11 from Arabidopsis thaliana (Mouse-ear cress).